Reading from the N-terminus, the 391-residue chain is MTNNTKTITLNIGPQHPATHGVLRLILEMDGEVVNNADPHIGLLHRGTEKLIEHKTYLQAIPYFDRLDYVSPMCQEHAFALAVESLLECEVPRRAQFIRVLFSELTRILNHTLNIGSQALDIGATTPLLWLFEEREKIMEFYEHVSGSRMHSNYFRPGGVAADLPEGLLEDIDKFIEQFPPKLHDIESLLNENRLWKQRLVDIGVASQKEAMDWGFSGPMLRGSGIAWDLRKSNPYDVYDEMDFKVPIGKNGDCYDRYFVRMLEMYESIKIIKQCIEKMPKGAIKTDDPKLTPPTRAKMKESMEAMIHHFKLYTEGYDVPAGETYKAVEAPKGEFGVYLYSQGGNRPYRCRIKAPGFAHLQGLDFMSKGHLMADVITIIATLDIVFGEIDR.

The protein belongs to the complex I 49 kDa subunit family. NDH-1 is composed of 14 different subunits. Subunits NuoB, C, D, E, F, and G constitute the peripheral sector of the complex.

Its subcellular location is the cell inner membrane. The enzyme catalyses a quinone + NADH + 5 H(+)(in) = a quinol + NAD(+) + 4 H(+)(out). In terms of biological role, NDH-1 shuttles electrons from NADH, via FMN and iron-sulfur (Fe-S) centers, to quinones in the respiratory chain. The immediate electron acceptor for the enzyme in this species is believed to be ubiquinone. Couples the redox reaction to proton translocation (for every two electrons transferred, four hydrogen ions are translocated across the cytoplasmic membrane), and thus conserves the redox energy in a proton gradient. The sequence is that of NADH-quinone oxidoreductase subunit D from Rickettsia conorii (strain ATCC VR-613 / Malish 7).